Consider the following 77-residue polypeptide: DNA-directed RNA polymerase subunit Rpo5 (77 aa).

The protein belongs to the archaeal Rpo5/eukaryotic RPB5 RNA polymerase subunit family. As to quaternary structure, part of the RNA polymerase complex.

Its subcellular location is the cytoplasm. It catalyses the reaction RNA(n) + a ribonucleoside 5'-triphosphate = RNA(n+1) + diphosphate. In terms of biological role, DNA-dependent RNA polymerase (RNAP) catalyzes the transcription of DNA into RNA using the four ribonucleoside triphosphates as substrates. This chain is DNA-directed RNA polymerase subunit Rpo5, found in Methanosphaera stadtmanae (strain ATCC 43021 / DSM 3091 / JCM 11832 / MCB-3).